Reading from the N-terminus, the 884-residue chain is Nonsense-mediated mRNA decay factor EBS1 (884 aa).

Disordered stretches follow at residues 596 to 645 and 755 to 774; these read NSMK…PTMG and QGGL…NSAY. A compositionally biased stretch (polar residues) spans 633–645; that stretch reads RSSSLDSFSPTMG. Residues 760–772 are compositionally biased toward low complexity; sequence SSQQPSSMSSLNS.

The protein belongs to the EST1 family. As to quaternary structure, interacts with NMD helicase UPF1. Interacts with CDC33.

It localises to the nucleus. Its subcellular location is the chromosome. The protein resides in the telomere. The protein localises to the cytoplasm. It is found in the P-body. Plays a role in nonsense-mediated mRNA decay (NMD). Recruits UPF1 to cytoplasmic mRNA decay bodies (P-bodies). Negative regulator of gene expression. Inhibits translation most likely through effects on eIF-4E (CDC33). Involved in telomere maintenance. This chain is Nonsense-mediated mRNA decay factor EBS1, found in Saccharomyces cerevisiae (strain ATCC 204508 / S288c) (Baker's yeast).